Here is a 118-residue protein sequence, read N- to C-terminus: Putative ankyrin repeat protein R747 (118 aa).

An ANK repeat occupies 70–99 (NCYYLLDYAIMKNDIPVIVTLIEKGANINR).

This chain is Putative ankyrin repeat protein R747, found in Acanthamoeba polyphaga (Amoeba).